Consider the following 763-residue polypeptide: Xaa-Pro dipeptidyl-peptidase (763 aa).

Active-site charge relay system residues include Ser-348, Asp-468, and His-498.

It belongs to the peptidase S15 family. As to quaternary structure, homodimer.

It localises to the cytoplasm. The catalysed reaction is Hydrolyzes Xaa-Pro-|- bonds to release unblocked, N-terminal dipeptides from substrates including Ala-Pro-|-p-nitroanilide and (sequentially) Tyr-Pro-|-Phe-Pro-|-Gly-Pro-|-Ile.. Removes N-terminal dipeptides sequentially from polypeptides having unsubstituted N-termini provided that the penultimate residue is proline. The chain is Xaa-Pro dipeptidyl-peptidase (pepX) from Lactococcus lactis subsp. cremoris (Streptococcus cremoris).